Reading from the N-terminus, the 330-residue chain is MVKKTKSNSLKKVATLALANLLLVGALTDNSAKAESKKDDTDLKLVSHNVYMLSTVLYPNWGQYKRADLIGQSSYIKNNDVVIFNEAFDNGASDKLLSNVKKEYPYQTPVLGRSQSGWDKTEGSYSSTVAEDGGVAIVSKYPIKEKIQHVFKSGCGFDNDSNKGFVYTKIEKNGKNVHVIGTHTQSEDSRCGAGHDRKIRAEQMKEISDFVKKKNIPKDETVYIGGDLNVNKGTPEFKDMLKNLNVNDVLYAGHNSTWDPQSNSIAKYNYPNGKPEHLDYIFTDKDHKQPKQLVNEVVTEKPKPWDVYAFPYYYVYNDFSDHYPIKAYSK.

The N-terminal stretch at M1–A34 is a signal peptide. A disulfide bridge links C155 with C191.

It belongs to the neutral sphingomyelinase family. In terms of assembly, monomer.

It localises to the secreted. It catalyses the reaction a 1,2-diacyl-sn-glycero-3-phosphocholine + H2O = phosphocholine + a 1,2-diacyl-sn-glycerol + H(+). Its function is as follows. Bacterial hemolysins are exotoxins that attack blood cell membranes and cause cell rupture. Beta-hemolysin is a phospholipase C with specific activity toward sphingomyelins. Has a high specificity for sphingomyelin, hydrolyzes lysophosphatidylcholine at a much lower rate, but has no activity towards phosphatidylcholine, phosphatidylethanolamine, or phosphatidylserine. This Staphylococcus aureus (strain NCTC 8325 / PS 47) protein is Phospholipase C (hlb).